The sequence spans 1512 residues: ATP-dependent permease YOR1 (1512 aa).

Residues 1–68 are disordered; sequence MSPLLPTHWG…KGMKETEDGG (68 aa). The span at 13-29 shows a compositional bias: polar residues; it reads APQNEPTLPSPSHSVST. The segment covering 31–65 has biased composition (basic and acidic residues); the sequence is VGDEEKLRRSEGSDGEDRINLDSNKYDVKGMKETE. The next 5 membrane-spanning stretches (helical) occupy residues 229–249, 288–308, 363–385, 475–495, and 507–527; these read ASLA…AGFI, GPGI…SLGM, FAAG…IIIL, GMTA…FITY, and IFTV…WPMT. Residues 246–533 enclose the ABC transmembrane type-1 1 domain; the sequence is AGFIKVFGDT…WPMTLSSTAD (288 aa). The tract at residues 594–656 is disordered; that stretch reads VLNGGKPGGP…SAPGIDEEIS (63 aa). A compositionally biased stretch (low complexity) spans 619–643; that stretch reads AEEIQAETAAGQPGAGEASAEGQGQ. In terms of domain architecture, ABC transporter 1 spans 651–871; sequence IDEEISEKKE…NGAFAKLIKE (221 aa). 683-690 serves as a coordination point for ATP; sequence GAIGSGKS. A run of 4 helical transmembrane segments spans residues 937–957, 974–994, 1067–1087, and 1167–1187; these read GVFM…FYVI, NGFY…ALFF, VILL…VSLL, and FLGS…SSVS. The region spanning 943-1217 is the ABC transmembrane type-1 2 domain; sequence LLFFCIVVAQ…LVRQIAEVEN (275 aa). Residues 1255 to 1496 enclose the ABC transporter 2 domain; that stretch reads IEFKDVRMRY…GGIFTEMCSK (242 aa). 1289–1296 serves as a coordination point for ATP; the sequence is GRTGAGKS.

Belongs to the ABC transporter superfamily. ABCC family. Conjugate transporter (TC 3.A.1.208) subfamily.

It is found in the extracellular vesicle membrane. It localises to the secreted. Functionally, transmembrane transporter. May play a role in the packaging or formation of extracellular vesicles (EVs), and in the export of virulence factors from EVs. Required for efficient non-lytic exocytosis from host macrophages, the process by which the yeast escapes host macrophages with both host cell and pathogen remaining viable. The sequence is that of ATP-dependent permease YOR1 from Cryptococcus neoformans var. grubii serotype A (strain H99 / ATCC 208821 / CBS 10515 / FGSC 9487) (Filobasidiella neoformans var. grubii).